We begin with the raw amino-acid sequence, 150 residues long: 6,7-dimethyl-8-ribityllumazine synthase (150 aa).

Residues phenylalanine 11, 43–45 (VFD), and 67–69 (AVI) each bind 5-amino-6-(D-ribitylamino)uracil. 72–73 (AT) serves as a coordination point for (2S)-2-hydroxy-3-oxobutyl phosphate. Catalysis depends on histidine 75, which acts as the Proton donor. Leucine 100 serves as a coordination point for 5-amino-6-(D-ribitylamino)uracil. Residue arginine 115 coordinates (2S)-2-hydroxy-3-oxobutyl phosphate.

This sequence belongs to the DMRL synthase family.

The enzyme catalyses (2S)-2-hydroxy-3-oxobutyl phosphate + 5-amino-6-(D-ribitylamino)uracil = 6,7-dimethyl-8-(1-D-ribityl)lumazine + phosphate + 2 H2O + H(+). It participates in cofactor biosynthesis; riboflavin biosynthesis; riboflavin from 2-hydroxy-3-oxobutyl phosphate and 5-amino-6-(D-ribitylamino)uracil: step 1/2. Functionally, catalyzes the formation of 6,7-dimethyl-8-ribityllumazine by condensation of 5-amino-6-(D-ribitylamino)uracil with 3,4-dihydroxy-2-butanone 4-phosphate. This is the penultimate step in the biosynthesis of riboflavin. The protein is 6,7-dimethyl-8-ribityllumazine synthase of Pyrobaculum calidifontis (strain DSM 21063 / JCM 11548 / VA1).